Consider the following 632-residue polypeptide: ATP-dependent DNA helicase RecQ (632 aa).

Positions 47 to 215 (IDATLMGKDS…LRHLNLQSPH (169 aa)) constitute a Helicase ATP-binding domain. Residue 60-67 (MATGNGKS) participates in ATP binding. Positions 159 to 162 (DEAH) match the DEAH box motif. Residues 236 to 385 (PMEQLCRFVL…IEALKLQAIG (150 aa)) enclose the Helicase C-terminal domain. Cys393, Cys410, Cys413, and Cys416 together coordinate Zn(2+). The HRDC domain occupies 544 to 624 (AQYDKDLFAR…QQHKKVLTQH (81 aa)).

The protein belongs to the helicase family. RecQ subfamily. It depends on Mg(2+) as a cofactor. Requires Zn(2+) as cofactor.

It catalyses the reaction Couples ATP hydrolysis with the unwinding of duplex DNA by translocating in the 3'-5' direction.. It carries out the reaction ATP + H2O = ADP + phosphate + H(+). An ATP-dependent DNA helicase which unwinds DNA in a 3'-5' direction. Plays a role in recombination. This chain is ATP-dependent DNA helicase RecQ, found in Pasteurella multocida (strain Pm70).